Reading from the N-terminus, the 1301-residue chain is Tyrosine-protein phosphatase 99A (1301 aa).

Positions 1-28 are cleaved as a signal peptide; that stretch reads MPRPQHHALLRAMLKLLLFASIAEHCAT. Residues 29–394 are Extracellular-facing; that stretch reads ALPTNSSNSP…RQSHNDYNLA (366 aa). Residues 31–63 form a disordered region; the sequence is PTNSSNSPSSPSPFTVASLPPTTASSSSSPAVI. Asn33 carries an N-linked (GlcNAc...) asparagine glycan. The span at 33 to 63 shows a compositional bias: low complexity; the sequence is NSSNSPSSPSPFTVASLPPTTASSSSSPAVI. Fibronectin type-III domains lie at 66–165, 173–269, and 270–376; these read SSFD…YAAV, KPQN…TDVG, and GPSA…LQPN. Asn176, Asn212, Asn278, Asn322, and Asn336 each carry an N-linked (GlcNAc...) asparagine glycan. Residues 395 to 415 traverse the membrane as a helical segment; sequence VLVGIIFSCFGIILIIMAFFL. Over 416–1301 the chain is Cytoplasmic; that stretch reads WSRKCFHAAY…TDAQNLDIVG (886 aa). 2 Tyrosine-protein phosphatase domains span residues 476–741 and 764–1016; these read FSRE…LVEA and LEQQ…LSFL. Cys682 serves as the catalytic Phosphocysteine intermediate. A compositionally biased stretch (polar residues) spans 1092-1106; that stretch reads TALNETVSTPSTDTN. Disordered regions lie at residues 1092-1199 and 1257-1281; these read TALN…PTIP and VGDL…NNHI. The segment covering 1107–1130 has biased composition (low complexity); sequence PSLLPILSLLPPTVAPLSSSSSTT. Positions 1131–1142 are enriched in pro residues; that stretch reads PPTPSTPTPQPP. Polar residues predominate over residues 1150–1161; that stretch reads HSPSDLSHQISS. Residues 1162–1188 are compositionally biased toward low complexity; the sequence is TVANAASPVTPATASASAGATPTTPMT. Polar residues predominate over residues 1264–1273; the sequence is NADNSPTASP.

Belongs to the protein-tyrosine phosphatase family. Receptor class subfamily. Selectively expressed in a subset of axons and pioneer neurons (including aCC and RP2) in the embryo.

It localises to the membrane. It catalyses the reaction O-phospho-L-tyrosyl-[protein] + H2O = L-tyrosyl-[protein] + phosphate. In terms of biological role, may play a key role in signal transduction and growth control. May have a role in the establishment of the intersegmental and segmental nerves. This is Tyrosine-protein phosphatase 99A (Ptp99A) from Drosophila melanogaster (Fruit fly).